We begin with the raw amino-acid sequence, 463 residues long: Bifunctional protein GlmU (463 aa).

The pyrophosphorylase stretch occupies residues 1-233; that stretch reads MSKKSTFIIL…NFEVMGINSR (233 aa). Residues 10-13, K24, Q76, 81-82, 104-106, G143, E158, N173, and N231 each bind UDP-N-acetyl-alpha-D-glucosamine; these read LAAG, GT, and YGD. A Mg(2+)-binding site is contributed by D106. N231 lines the Mg(2+) pocket. The segment at 234 to 254 is linker; the sequence is YELFVAEQELKLRINKEHLSK. The N-acetyltransferase stretch occupies residues 255–463; it reads GVQIIDIYST…LRRKQMYENR (209 aa). UDP-N-acetyl-alpha-D-glucosamine-binding residues include R336 and K354. H366 (proton acceptor) is an active-site residue. UDP-N-acetyl-alpha-D-glucosamine contacts are provided by Y369 and N380. Residues 389–390, A426, and R443 each bind acetyl-CoA; that span reads NY.

It in the N-terminal section; belongs to the N-acetylglucosamine-1-phosphate uridyltransferase family. This sequence in the C-terminal section; belongs to the transferase hexapeptide repeat family. Homotrimer. Mg(2+) is required as a cofactor.

It localises to the cytoplasm. The enzyme catalyses alpha-D-glucosamine 1-phosphate + acetyl-CoA = N-acetyl-alpha-D-glucosamine 1-phosphate + CoA + H(+). It carries out the reaction N-acetyl-alpha-D-glucosamine 1-phosphate + UTP + H(+) = UDP-N-acetyl-alpha-D-glucosamine + diphosphate. It functions in the pathway nucleotide-sugar biosynthesis; UDP-N-acetyl-alpha-D-glucosamine biosynthesis; N-acetyl-alpha-D-glucosamine 1-phosphate from alpha-D-glucosamine 6-phosphate (route II): step 2/2. Its pathway is nucleotide-sugar biosynthesis; UDP-N-acetyl-alpha-D-glucosamine biosynthesis; UDP-N-acetyl-alpha-D-glucosamine from N-acetyl-alpha-D-glucosamine 1-phosphate: step 1/1. The protein operates within bacterial outer membrane biogenesis; LPS lipid A biosynthesis. In terms of biological role, catalyzes the last two sequential reactions in the de novo biosynthetic pathway for UDP-N-acetylglucosamine (UDP-GlcNAc). The C-terminal domain catalyzes the transfer of acetyl group from acetyl coenzyme A to glucosamine-1-phosphate (GlcN-1-P) to produce N-acetylglucosamine-1-phosphate (GlcNAc-1-P), which is converted into UDP-GlcNAc by the transfer of uridine 5-monophosphate (from uridine 5-triphosphate), a reaction catalyzed by the N-terminal domain. This is Bifunctional protein GlmU from Caldicellulosiruptor saccharolyticus (strain ATCC 43494 / DSM 8903 / Tp8T 6331).